The following is a 258-amino-acid chain: Pimeloyl-[acyl-carrier protein] methyl ester esterase (258 aa).

The region spanning 16-241 (LVLLHGWGLN…GSAHAPFVSH (226 aa)) is the AB hydrolase-1 domain. Substrate is bound by residues Trp-22, 82-83 (SM), and 143-147 (FLALQ). Residue Ser-82 is the Nucleophile of the active site. Residues Asp-207 and His-235 contribute to the active site. His-235 contributes to the substrate binding site.

Belongs to the AB hydrolase superfamily. Carboxylesterase BioH family. In terms of assembly, monomer.

It localises to the cytoplasm. It catalyses the reaction 6-carboxyhexanoyl-[ACP] methyl ester + H2O = 6-carboxyhexanoyl-[ACP] + methanol + H(+). Its pathway is cofactor biosynthesis; biotin biosynthesis. Its function is as follows. The physiological role of BioH is to remove the methyl group introduced by BioC when the pimeloyl moiety is complete. It allows to synthesize pimeloyl-ACP via the fatty acid synthetic pathway through the hydrolysis of the ester bonds of pimeloyl-ACP esters. In Yersinia enterocolitica serotype O:8 / biotype 1B (strain NCTC 13174 / 8081), this protein is Pimeloyl-[acyl-carrier protein] methyl ester esterase.